A 231-amino-acid polypeptide reads, in one-letter code: MFLVGLTGGIASGKSSVIQVFQQLGCAVIDVDVIARHVVQPGYPAHRRIVEAFGTEVLLENGDIDRKVLGDLIFNQPDRRQLLNSITHPEIRKEMMKETFKYFLRGYRYVILDIPLLFETKKLLKYMKHTVVVYCDRDTQLARLMKRNNLNREDAEARINAQLPLKDKARMANHVLDNSGEWSLTRRQAILLHAKLERSMEYLPLRLGFLTGLAGIASLLYLLTRYLLPSP.

Residues 3-207 form the DPCK domain; that stretch reads LVGLTGGIAS…RSMEYLPLRL (205 aa). Residue 8-15 coordinates ATP; it reads GGIASGKS.

It belongs to the CoaE family.

The sequence is that of Dephospho-CoA kinase domain-containing protein (Dcakd) from Mus musculus (Mouse).